The sequence spans 858 residues: DNA mismatch repair protein MutS (858 aa).

Residue 609–616 (GPNMSGKS) participates in ATP binding.

It belongs to the DNA mismatch repair MutS family.

Its function is as follows. This protein is involved in the repair of mismatches in DNA. It is possible that it carries out the mismatch recognition step. This protein has a weak ATPase activity. The polypeptide is DNA mismatch repair protein MutS (Enterococcus faecalis (strain ATCC 700802 / V583)).